A 140-amino-acid polypeptide reads, in one-letter code: Large ribosomal subunit protein uL13 (140 aa).

This sequence belongs to the universal ribosomal protein uL13 family. Part of the 50S ribosomal subunit.

Its function is as follows. This protein is one of the early assembly proteins of the 50S ribosomal subunit, although it is not seen to bind rRNA by itself. It is important during the early stages of 50S assembly. The protein is Large ribosomal subunit protein uL13 of Methanosarcina barkeri (strain Fusaro / DSM 804).